Here is a 128-residue protein sequence, read N- to C-terminus: Keratin-associated protein 21-1 (128 aa).

Residues 11-117 (GGCGYGSRYG…RYGCGYGSGC (107 aa)) form a 51 X 2 AA repeats of G-[YCGS] region.

Belongs to the KRTAP type 21 family. As to quaternary structure, interacts with hair keratins. Strong expression in narrowly defined pattern restricted to the lower and middle cortical regions of the hair shaft in both developing and cycling hair. During hair follicle regression (catagen), expression levels decrease until expression is no longer detectable in follicles at resting stage (telogen).

Its function is as follows. In the hair cortex, hair keratin intermediate filaments are embedded in an interfilamentous matrix, consisting of hair keratin-associated proteins (KRTAP), which are essential for the formation of a rigid and resistant hair shaft through their extensive disulfide bond cross-linking with abundant cysteine residues of hair keratins. The matrix proteins include the high-sulfur and high-glycine-tyrosine keratins. The polypeptide is Keratin-associated protein 21-1 (Krtap21-1) (Mus musculus (Mouse)).